The sequence spans 969 residues: RNA polymerase-associated protein RapA (969 aa).

The region spanning 164–334 (EVGRRHAPRV…FARLRLLDPD (171 aa)) is the Helicase ATP-binding domain. 177-184 (DEVGLGKT) provides a ligand contact to ATP. A DEAH box motif is present at residues 280–283 (DEAH). The Helicase C-terminal domain maps to 492-686 (RVNWLLEKVK…ELKSQLEQGR (195 aa)).

This sequence belongs to the SNF2/RAD54 helicase family. RapA subfamily. As to quaternary structure, interacts with the RNAP. Has a higher affinity for the core RNAP than for the holoenzyme. Its ATPase activity is stimulated by binding to RNAP.

Its function is as follows. Transcription regulator that activates transcription by stimulating RNA polymerase (RNAP) recycling in case of stress conditions such as supercoiled DNA or high salt concentrations. Probably acts by releasing the RNAP, when it is trapped or immobilized on tightly supercoiled DNA. Does not activate transcription on linear DNA. Probably not involved in DNA repair. The sequence is that of RNA polymerase-associated protein RapA from Vibrio parahaemolyticus serotype O3:K6 (strain RIMD 2210633).